The sequence spans 320 residues: Zinc finger protein 330 (320 aa).

The tract at residues Met1 to Arg23 is disordered. The short motif at Lys3–Lys11 is the Nuclear localization signal element. The span at Lys10 to Leu22 shows a compositional bias: basic and acidic residues. 4 C4-type zinc fingers span residues Cys42–Cys58, Cys67–Cys104, Cys129–Cys149, and Cys175–Cys189. Disordered regions lie at residues Glu206–Tyr250 and Gly264–Asn303. Positions Cys216–Asp225 are enriched in basic and acidic residues. The segment covering Asp269 to Gly287 has biased composition (acidic residues). Ser291 is modified (phosphoserine).

It belongs to the NOA36 family.

The protein resides in the nucleus. It is found in the nucleolus. It localises to the chromosome. The protein localises to the centromere. The sequence is that of Zinc finger protein 330 (ZNF330) from Bos taurus (Bovine).